A 93-amino-acid chain; its full sequence is Progonadoliberin-2 (93 aa).

The N-terminal stretch at 1 to 24 is a signal peptide; the sequence is MACQRHLLFLLLVLFAVSTQLSHG. At glutamine 25 the chain carries Pyrrolidone carboxylic acid. Glycine 34 bears the Glycine amide mark.

It belongs to the GnRH family. Midbrain and hindbrain.

The protein resides in the secreted. Its function is as follows. Stimulates the secretion of gonadotropins. The protein is Progonadoliberin-2 (gnrh2) of Aquarana catesbeiana (American bullfrog).